Reading from the N-terminus, the 234-residue chain is Urease accessory protein UreF (234 aa).

This sequence belongs to the UreF family. UreD, UreF and UreG form a complex that acts as a GTP-hydrolysis-dependent molecular chaperone, activating the urease apoprotein by helping to assemble the nickel containing metallocenter of UreC. The UreE protein probably delivers the nickel.

Its subcellular location is the cytoplasm. In terms of biological role, required for maturation of urease via the functional incorporation of the urease nickel metallocenter. This is Urease accessory protein UreF from Azoarcus sp. (strain BH72).